Reading from the N-terminus, the 370-residue chain is Anhydro-N-acetylmuramic acid kinase (370 aa).

Residue 12 to 19 (GTSLDGID) coordinates ATP.

Belongs to the anhydro-N-acetylmuramic acid kinase family.

It carries out the reaction 1,6-anhydro-N-acetyl-beta-muramate + ATP + H2O = N-acetyl-D-muramate 6-phosphate + ADP + H(+). The protein operates within amino-sugar metabolism; 1,6-anhydro-N-acetylmuramate degradation. Its pathway is cell wall biogenesis; peptidoglycan recycling. In terms of biological role, catalyzes the specific phosphorylation of 1,6-anhydro-N-acetylmuramic acid (anhMurNAc) with the simultaneous cleavage of the 1,6-anhydro ring, generating MurNAc-6-P. Is required for the utilization of anhMurNAc either imported from the medium or derived from its own cell wall murein, and thus plays a role in cell wall recycling. In Yersinia enterocolitica serotype O:8 / biotype 1B (strain NCTC 13174 / 8081), this protein is Anhydro-N-acetylmuramic acid kinase.